An 803-amino-acid chain; its full sequence is DNA polymerase 2 (803 aa).

The protein belongs to the DNA polymerase type-B family.

The enzyme catalyses DNA(n) + a 2'-deoxyribonucleoside 5'-triphosphate = DNA(n+1) + diphosphate. The chain is DNA polymerase 2 (polB) from Aeropyrum pernix (strain ATCC 700893 / DSM 11879 / JCM 9820 / NBRC 100138 / K1).